A 260-amino-acid polypeptide reads, in one-letter code: Imidazole glycerol phosphate synthase subunit HisF (260 aa).

Catalysis depends on residues Asp-11 and Asp-130.

This sequence belongs to the HisA/HisF family. In terms of assembly, heterodimer of HisH and HisF.

It localises to the cytoplasm. It catalyses the reaction 5-[(5-phospho-1-deoxy-D-ribulos-1-ylimino)methylamino]-1-(5-phospho-beta-D-ribosyl)imidazole-4-carboxamide + L-glutamine = D-erythro-1-(imidazol-4-yl)glycerol 3-phosphate + 5-amino-1-(5-phospho-beta-D-ribosyl)imidazole-4-carboxamide + L-glutamate + H(+). Its pathway is amino-acid biosynthesis; L-histidine biosynthesis; L-histidine from 5-phospho-alpha-D-ribose 1-diphosphate: step 5/9. Functionally, IGPS catalyzes the conversion of PRFAR and glutamine to IGP, AICAR and glutamate. The HisF subunit catalyzes the cyclization activity that produces IGP and AICAR from PRFAR using the ammonia provided by the HisH subunit. This chain is Imidazole glycerol phosphate synthase subunit HisF, found in Desulfatibacillum aliphaticivorans.